The following is a 315-amino-acid chain: GTP cyclohydrolase MptA 1 (315 aa).

Belongs to the GTP cyclohydrolase IV family. As to quaternary structure, homodimer. The cofactor is Fe(2+).

The catalysed reaction is GTP + H2O = 7,8-dihydroneopterin 2',3'-cyclic phosphate + formate + diphosphate + H(+). Its pathway is cofactor biosynthesis; 5,6,7,8-tetrahydromethanopterin biosynthesis. In terms of biological role, converts GTP to 7,8-dihydro-D-neopterin 2',3'-cyclic phosphate, the first intermediate in the biosynthesis of coenzyme methanopterin. The chain is GTP cyclohydrolase MptA 1 from Methanocella arvoryzae (strain DSM 22066 / NBRC 105507 / MRE50).